The following is a 226-amino-acid chain: SURF1-like protein (226 aa).

A run of 2 helical transmembrane segments spans residues 3–23 (TNLVVLITFTILISLGFWQLS) and 199–219 (LEYALTWFGLAISLIVIYVIY).

Belongs to the SURF1 family.

It localises to the cell membrane. The polypeptide is SURF1-like protein (Rickettsia felis (strain ATCC VR-1525 / URRWXCal2) (Rickettsia azadi)).